Consider the following 583-residue polypeptide: MPQIGLVSAVNLRVQGSSAYLWSSRSSSLGTESRDGCLQRNSLCFAGSESMGHKLKIRTPHATTRRLVKDLGPLKVVCIDYPRPELDNTVNYLEAAFLSSTFRASPRPTKPLEIVIAGAGLGGLSTAKYLADAGHKPILLEARDVLGGKVAAWKDDDGDWYETGLHIFFGAYPNIQNLFGELGINDRLQWKEHSMIFAMPSKPGEFSRFDFSEALPAPLNGILAILKNNEMLTWPEKVKFAIGLLPAMLGGQSYVEAQDGISVKDWMRKQGVPDRVTDEVFIAMSKALNFINPDELSMQCILIALNRFLQEKHGSKMAFLDGNPPERLCMPIVEHIESKGGQVRLNSRIKKIELNEDGSVKSFILSDGSAIEGDAFVFAAPVDIFKLLLPEDWKEIPYFQKLEKLVGVPVINVHIWFDRKLKNTYDHLLFSRSSLLSVYADMSVTCKEYYNPNQSMLELVFAPAEEWISRSDSEIIDATMKELATLFPDEISADQSKAKILKYHVVKTPRSVYKTVPGCEPCRPLQRSPIEGFYLAGDYTKQKYLASMEGAVLSGKLCAQAIVQDYELLVGRSQKKLSEASVV.

The transit peptide at Met-1 to Pro-111 directs the protein to the chloroplast and chromoplast. FAD-binding positions include Gly-118 to Gly-134, Glu-141 to Ala-142, Lys-149, His-166 to Ile-167, and Tyr-172. Residue Arg-307 coordinates substrate. Positions 349 and 538 each coordinate FAD. Ala-546 provides a ligand contact to substrate. Position 548 (Met-548) interacts with FAD.

This sequence belongs to the carotenoid/retinoid oxidoreductase family. As to quaternary structure, homotetramer. It depends on FAD as a cofactor.

The protein localises to the plastid. It localises to the chloroplast. It is found in the chromoplast. The protein resides in the membrane. It catalyses the reaction 2 a plastoquinone + 15-cis-phytoene = 9,9',15-tri-cis-zeta-carotene + 2 a plastoquinol. Its pathway is carotenoid biosynthesis; lycopene biosynthesis. Converts phytoene into zeta-carotene via the intermediary of phytofluene by the symmetrical introduction of two double bonds at the C-11 and C-11' positions of phytoene with a concomitant isomerization of two neighboring double bonds at the C9 and C9' positions from trans to cis. The polypeptide is 15-cis-phytoene desaturase, chloroplastic/chromoplastic (PDS) (Solanum lycopersicum (Tomato)).